The primary structure comprises 84 residues: Exodeoxyribonuclease 7 small subunit (84 aa).

The disordered stretch occupies residues 65 to 84 (QEGDWTTSPFEPASGEPPGG).

It belongs to the XseB family. In terms of assembly, heterooligomer composed of large and small subunits.

The protein localises to the cytoplasm. The catalysed reaction is Exonucleolytic cleavage in either 5'- to 3'- or 3'- to 5'-direction to yield nucleoside 5'-phosphates.. Its function is as follows. Bidirectionally degrades single-stranded DNA into large acid-insoluble oligonucleotides, which are then degraded further into small acid-soluble oligonucleotides. The polypeptide is Exodeoxyribonuclease 7 small subunit (Syntrophobacter fumaroxidans (strain DSM 10017 / MPOB)).